The sequence spans 468 residues: ATP synthase subunit beta (468 aa).

148-155 serves as a coordination point for ATP; the sequence is GGAGVGKT.

This sequence belongs to the ATPase alpha/beta chains family. As to quaternary structure, F-type ATPases have 2 components, CF(1) - the catalytic core - and CF(0) - the membrane proton channel. CF(1) has five subunits: alpha(3), beta(3), gamma(1), delta(1), epsilon(1). CF(0) has three main subunits: a(1), b(2) and c(9-12). The alpha and beta chains form an alternating ring which encloses part of the gamma chain. CF(1) is attached to CF(0) by a central stalk formed by the gamma and epsilon chains, while a peripheral stalk is formed by the delta and b chains.

The protein resides in the cell inner membrane. The enzyme catalyses ATP + H2O + 4 H(+)(in) = ADP + phosphate + 5 H(+)(out). Its function is as follows. Produces ATP from ADP in the presence of a proton gradient across the membrane. The catalytic sites are hosted primarily by the beta subunits. This chain is ATP synthase subunit beta, found in Xanthomonas campestris pv. campestris (strain B100).